Here is a 542-residue protein sequence, read N- to C-terminus: Protein phosphatase 1G (542 aa).

The N-myristoyl glycine moiety is linked to residue Gly-2. An Omega-N-methylarginine modification is found at Arg-22. The region spanning 26-502 (PYGFSAMQGW…DNMTCIIICF (477 aa)) is the PPM-type phosphatase domain. Asp-60 and Gly-61 together coordinate Mn(2+). 2 disordered regions span residues 117 to 136 (IAGRPTEDEDDKDKVADEDD) and 164 to 325 (CQKV…SDSG). A Phosphothreonine modification is found at Thr-122. Acidic residues-rich tracts occupy residues 123-136 (EDEDDKDKVADEDD) and 259-309 (DSED…DEEM). Lys-380 carries the post-translational modification N6-acetyllysine. 2 residues coordinate Mn(2+): Asp-438 and Asp-493. The interval 513 to 542 (ESGKRKLEEALSTEGAEDTGNSDKKKAKRD) is disordered. Ser-524 bears the Phosphoserine mark.

This sequence belongs to the PP2C family. In terms of assembly, interacts with NOL3; may dephosphorylate NOL3. Mg(2+) serves as cofactor. Mn(2+) is required as a cofactor. Highly expressed in testis. Low level of expression in kidney. Also expressed in a number of tissues undergoing proliferation including embryo, uterus at pregnancy, placenta, and ovaries.

Its subcellular location is the nucleus. It localises to the membrane. It carries out the reaction O-phospho-L-seryl-[protein] + H2O = L-seryl-[protein] + phosphate. The catalysed reaction is O-phospho-L-threonyl-[protein] + H2O = L-threonyl-[protein] + phosphate. In terms of biological role, may be involved in regulation of cell cycle. This is Protein phosphatase 1G (Ppm1g) from Mus musculus (Mouse).